The chain runs to 320 residues: MVEVRHSRVIILGSGPAGYSAAVYAARANLKPLLITGMQAGGQLTTTTEVDNWPGDVHGLTGPALMERMREHAERFETEIVFDHINAVDFAAKPYTLTGDSATYTCDALIIATGASARYLGLPSEEAFMGKGVSACATCDGFFYRNKPVAVVGGGNTAVEEALYLANIASTVTLIHRRETFRAEKILIDKLNARVAEGKIILKLNANLDEVLGDNMGVTGARLKNNDGSFDELKVDGVFIAIGHTPNTSLFEGQLTLKDGYLVVQGGRDGNATATSVEGIFAAGDVADHVYRQAITSAGAGCMAALDTERYLDGLQNASE.

36 to 43 (TGMQAGGQ) lines the FAD pocket. The cysteines at positions 136 and 139 are disulfide-linked. 285-294 (DVADHVYRQA) lines the FAD pocket.

It belongs to the class-II pyridine nucleotide-disulfide oxidoreductase family.

The catalysed reaction is 2-amino-2-deoxy-D-gluconate = 2-dehydro-3-deoxy-D-gluconate + NH4(+). In terms of biological role, catalyzes the conversion of 2-amino-2-deoxy-D-gluconate (GlcNA) to 2-keto-3-deoxy-D-gluconic acid (KDGA) and ammonia. The sequence is that of Glucosaminate ammonia-lyase from Pseudomonas fluorescens.